Reading from the N-terminus, the 119-residue chain is Circadian clock oscillator protein KaiB (119 aa).

It belongs to the KaiB family. In terms of assembly, may undergo a major conformational rearrangment; in the free state forms homooligomers. When bound to KaiC switches to a monomeric thioredoxin-fold (KaiB(fs)). The active oscillator complex is probably KaiC(6):KaiB(6).

Component of the KaiBC clock protein complex, which constitutes the main circadian regulator in cyanobacteria; it may modify the ATPase activity of KaiC. In terms of biological role, may be a metamorphic protein which reversibly switches between an inactive tetrameric fold and a rare, thioredoxin-like monomeric fold (KaiB(fs)). KaiB(fs) binds phospho-KaiC, and perhaps clock output effectors. This is Circadian clock oscillator protein KaiB from Prochlorococcus marinus (strain MIT 9313).